The chain runs to 183 residues: MIAKKRNIQTFLIFSLATILGGIYWYVRSFWISGDPFSPAGGNIFGHYLWNEIDLQVQTAEQARHGISPATLDLQQAINKVGSDVVFYAILSVFTLRNNKILWVFFSIVLTYVLFWFSVTQGDRYLSPIYPLSVLQVAISIASLIKDINITNYKLGRYFILVCIIFFRGDRCILNSNIFILNT.

This is an uncharacterized protein from Shigella flexneri.